We begin with the raw amino-acid sequence, 667 residues long: High affinity sulfate transporter 1 (667 aa).

A disordered region spans residues 16 to 38 (ETRSNSSSHRHGGGGGGDDTTSL). 11 consecutive transmembrane segments (helical) span residues 106-126 (GDFI…LAYA), 131-151 (LDPW…AFMG), 156-176 (IAIG…SNEI), 185-205 (LRLA…LGVC), 208-228 (GFLI…GAAI), 269-289 (WETI…KYIA), 296-316 (FWVS…FVYI), 350-370 (GAGV…AIAI), 425-445 (VSNI…TPLF), 452-472 (VLAS…AMVL), and 486-506 (GAFF…AVAI). In terms of domain architecture, STAS spans 537 to 660 (QYPKAAQIPG…LTVADAVATY (124 aa)).

Belongs to the SLC26A/SulP transporter (TC 2.A.53) family.

Its subcellular location is the membrane. Functionally, high-affinity H(+)/sulfate cotransporter that mediates the uptake of sulfate by plant roots from low concentrations of sulfate in the soil solution. The protein is High affinity sulfate transporter 1 (ST1) of Stylosanthes hamata (Caribbean stylo).